The chain runs to 42 residues: MNNNFTKYLSTAPVIGVLWMTFTAGFIIELNRFFPDVLYFYL.

The helical transmembrane segment at 8–28 (YLSTAPVIGVLWMTFTAGFII) threads the bilayer.

The protein belongs to the PsaJ family.

It is found in the plastid. The protein resides in the chloroplast thylakoid membrane. In terms of biological role, may help in the organization of the PsaE and PsaF subunits. This is Photosystem I reaction center subunit IX from Pyropia yezoensis (Susabi-nori).